We begin with the raw amino-acid sequence, 126 residues long: Aspartate 1-decarboxylase (126 aa).

The active-site Schiff-base intermediate with substrate; via pyruvic acid is Ser-25. At Ser-25 the chain carries Pyruvic acid (Ser). A substrate-binding site is contributed by Thr-57. The active-site Proton donor is Tyr-58. A substrate-binding site is contributed by 73-75 (GAA).

It belongs to the PanD family. Heterooctamer of four alpha and four beta subunits. The cofactor is pyruvate. In terms of processing, is synthesized initially as an inactive proenzyme, which is activated by self-cleavage at a specific serine bond to produce a beta-subunit with a hydroxyl group at its C-terminus and an alpha-subunit with a pyruvoyl group at its N-terminus.

It localises to the cytoplasm. It carries out the reaction L-aspartate + H(+) = beta-alanine + CO2. It functions in the pathway cofactor biosynthesis; (R)-pantothenate biosynthesis; beta-alanine from L-aspartate: step 1/1. Catalyzes the pyruvoyl-dependent decarboxylation of aspartate to produce beta-alanine. The polypeptide is Aspartate 1-decarboxylase (Yersinia pseudotuberculosis serotype IB (strain PB1/+)).